Here is a 708-residue protein sequence, read N- to C-terminus: ARF GTPase-activating protein GIT2 (708 aa).

The 124-residue stretch at 1–124 (MSKRLRSSDV…AFVHRLPCRE (124 aa)) folds into the Arf-GAP domain. Residues 11-34 (CADCNGPDPSWASVNRGTFICDEC) form a C4-type zinc finger. 3 ANK repeats span residues 132 to 161 (DLSK…QANF), 166 to 195 (KGST…DPGT), and 199 to 228 (SGKT…ELTD). The disordered stretch occupies residues 376–592 (STQHSTESQD…SPTLPSTEDV (217 aa)). Over residues 384-401 (QDNDQPDYDSVASDEDTD) the composition is skewed to acidic residues. Phosphoserine is present on residues Ser393 and Ser396. At Thr400 the chain carries Phosphothreonine. Polar residues predominate over residues 407–438 (SKANRQKLQTLQSENSSLRRQATASACQVQTG). Positions 504–518 (TSSSSLPSFPSTLSW) are enriched in low complexity. Ser508, Ser511, and Ser519 each carry phosphoserine. Basic and acidic residues predominate over residues 519 to 532 (SRDESARRASRLEK). Residue Thr536 is modified to Phosphothreonine. Residue Ser563 is modified to Phosphoserine.

As to quaternary structure, may form heterooligomers with GIT1. Directly interacts with protein Piccolo/PCLO. Interacts with PPFIA1 and PPFIA2. Interacts with ARHGEF7. Identified in a complex with ARHGEF6 and BIN2. Interacts with PAK3. Interacts with PXN/paxillin. Interacts with TGFB1I1. Forms a complex with EFNB1 and GRB4/NCK2. Tyrosine phosphorylated when coexpressed in cells with PTK2/FAK1 and SRC. As to expression, expressed in the brain (at protein level).

GTPase-activating protein for ADP ribosylation factor family members, including ARF1. The chain is ARF GTPase-activating protein GIT2 (Git2) from Mus musculus (Mouse).